Reading from the N-terminus, the 357-residue chain is Peptide chain release factor 1 (357 aa).

Gln-232 carries the post-translational modification N5-methylglutamine.

It belongs to the prokaryotic/mitochondrial release factor family. Post-translationally, methylated by PrmC. Methylation increases the termination efficiency of RF1.

It is found in the cytoplasm. Peptide chain release factor 1 directs the termination of translation in response to the peptide chain termination codons UAG and UAA. In Maridesulfovibrio salexigens (strain ATCC 14822 / DSM 2638 / NCIMB 8403 / VKM B-1763) (Desulfovibrio salexigens), this protein is Peptide chain release factor 1.